Consider the following 469-residue polypeptide: Tetratricopeptide repeat protein 38 (469 aa).

TPR repeat units lie at residues 107–140, 179–212, and 251–284; these read REML…HPTD, SYVK…DQTD, and CHVY…QCFA.

It belongs to the TTC38 family.

The polypeptide is Tetratricopeptide repeat protein 38 (ttc38) (Xenopus tropicalis (Western clawed frog)).